The sequence spans 398 residues: Ubiquitin-like modifier-activating enzyme 5 (398 aa).

Residues Gly76, Asp97, Lys120, Asn143, and Asn177 each coordinate ATP. Zn(2+) is bound by residues Cys219 and Cys222. Cys243 functions as the Glycyl thioester intermediate in the catalytic mechanism. 2 residues coordinate Zn(2+): Cys296 and Cys301.

The protein belongs to the ubiquitin-activating E1 family. UBA5 subfamily.

Its function is as follows. E1-like enzyme which activates UFM1. This Drosophila grimshawi (Hawaiian fruit fly) protein is Ubiquitin-like modifier-activating enzyme 5.